The sequence spans 115 residues: Large ribosomal subunit protein bL20 (115 aa).

The protein belongs to the bacterial ribosomal protein bL20 family.

Binds directly to 23S ribosomal RNA and is necessary for the in vitro assembly process of the 50S ribosomal subunit. It is not involved in the protein synthesizing functions of that subunit. The chain is Large ribosomal subunit protein bL20 from Prochlorococcus marinus (strain SARG / CCMP1375 / SS120).